Here is a 475-residue protein sequence, read N- to C-terminus: Cytosolic non-specific dipeptidase (475 aa).

At Lys9 the chain carries N6-acetyllysine. The residue at position 58 (Ser58) is a Phosphoserine. Mn(2+) is bound at residue His99. Asp101 is a catalytic residue. Position 132 (Asp132) interacts with Mn(2+). Glu166 (proton acceptor) is an active-site residue. Substrate-binding positions include 166 to 167 (EE), Asp195, His228, Thr330, Arg343, Ser417, and His445. Mn(2+)-binding residues include Glu167 and Asp195. His445 is a Mn(2+) binding site.

This sequence belongs to the peptidase M20A family. In terms of assembly, homodimer. Mn(2+) serves as cofactor.

It is found in the cytoplasm. It catalyses the reaction Hydrolysis of dipeptides, preferentially hydrophobic dipeptides including prolyl amino acids.. The enzyme catalyses L-threonyl-L-threonine + H2O = 2 L-threonine. The catalysed reaction is L-threonyl-L-serine + H2O = L-threonine + L-serine. It carries out the reaction L-seryl-L-threonine + H2O = L-threonine + L-serine. It catalyses the reaction L-cysteinylglycine + H2O = L-cysteine + glycine. The enzyme catalyses L-alanyl-L-cysteine + H2O = L-cysteine + L-alanine. The catalysed reaction is (S)-lactate + L-phenylalanine = N-[(S)-lactoyl]-L-phenylalanine + H2O. Functionally, catalyzes the peptide bond hydrolysis in dipeptides, displaying a non-redundant activity toward threonyl dipeptides. Mediates threonyl dipeptide catabolism in a tissue-specific way. Has high dipeptidase activity toward cysteinylglycine, an intermediate metabolite in glutathione metabolism. Metabolizes N-lactoyl-amino acids, both through hydrolysis to form lactic acid and amino acids, as well as through their formation by reverse proteolysis. Plays a role in the regulation of cell cycle arrest and apoptosis. This Bos taurus (Bovine) protein is Cytosolic non-specific dipeptidase (CNDP2).